Here is a 161-residue protein sequence, read N- to C-terminus: Nucleotide-binding protein Plav_2177 (161 aa).

Belongs to the YajQ family.

Its function is as follows. Nucleotide-binding protein. This is Nucleotide-binding protein Plav_2177 from Parvibaculum lavamentivorans (strain DS-1 / DSM 13023 / NCIMB 13966).